Reading from the N-terminus, the 628-residue chain is Patulin synthase (628 aa).

Residues 1 to 19 form the signal peptide; sequence MRLTSGIFHAAIAVAAVGA. An N-linked (GlcNAc...) asparagine glycan is attached at Asn-49. Residues 61 to 62 and 82 to 83 contribute to the FAD site; these read TA and EA. Asn-93 carries an N-linked (GlcNAc...) asparagine glycan. 148 to 151 serves as a coordination point for FAD; the sequence is NYMA. 6 N-linked (GlcNAc...) asparagine glycosylation sites follow: Asn-198, Asn-261, Asn-283, Asn-429, Asn-486, and Asn-526. His-564 acts as the Proton acceptor in catalysis. Asn-575 carries an N-linked (GlcNAc...) asparagine glycan. FAD is bound by residues Ala-598 and 609 to 610; that span reads PQ.

Belongs to the GMC oxidoreductase family. FAD is required as a cofactor.

The protein resides in the cytoplasm. Its subcellular location is the cell cortex. It is found in the vacuole. It localises to the secreted. The protein localises to the cell wall. It catalyses the reaction (E)-ascladiol + A = patulin + AH2. Its pathway is mycotoxin biosynthesis; patulin biosynthesis. In terms of biological role, patulin synthase; part of the gene cluster that mediates the biosynthesis of patulin, an acetate-derived tetraketide mycotoxin produced by several fungal species that shows antimicrobial properties against several bacteria. PatE catalyzes the last step of the pathway which is the conversion of E-ascladiol to patulin. The pathway begins with the synthesis of 6-methylsalicylic acid by the polyketide synthase (PKS) patK via condensation of acetate and malonate units. The 6-methylsalicylic acid decarboxylase patG then catalyzes the decarboxylation of 6-methylsalicylic acid to yield m-cresol (also known as 3-methylphenol). These first reactions occur in the cytosol. The intermediate m-cresol is then transported into the endoplasmic reticulum where the cytochrome P450 monooxygenase patH converts it to m-hydroxybenzyl alcohol, which is further converted to gentisyl alcohol by the cytochrome P450 monooxygenase patI. The oxidoreductases patJ and patO further convert gentisyl alcohol to isoepoxydon in the vacuole. PatN catalyzes then the transformation of isoepoxydon into phyllostine. The cluster protein patF is responsible for the conversion from phyllostine to neopatulin whereas the alcohol dehydrogenase patD converts neopatulin to E-ascladiol. The steps between isoepoxydon and E-ascladiol occur in the cytosol, and E-ascladiol is probably secreted to the extracellular space by one of the cluster-specific transporters patC or patM. Finally, the secreted patulin synthase patE catalyzes the conversion of E-ascladiol to patulin. The polypeptide is Patulin synthase (Penicillium expansum (Blue mold rot fungus)).